A 706-amino-acid chain; its full sequence is 1,4-alpha-glucan-branching enzyme (706 aa).

Residues tryptophan 96 and lysine 133 each contribute to the (1,4-alpha-D-glucosyl)n site. Residue aspartate 358 is the Nucleophile of the active site. Catalysis depends on glutamate 419, which acts as the Proton donor.

The protein belongs to the glycosyl hydrolase 13 family. GlgB subfamily. As to quaternary structure, monomer.

The protein resides in the cytoplasm. It catalyses the reaction Transfers a segment of a (1-&gt;4)-alpha-D-glucan chain to a primary hydroxy group in a similar glucan chain.. It functions in the pathway glycan biosynthesis; glycogen biosynthesis. Glycogen-branching enzyme participates in the glycogen biosynthetic process along with glycogenin and glycogen synthase. Generates alpha-1,6-glucosidic branches from alpha-1,4-linked glucose chains, to increase solubility of the glycogen polymer. The chain is 1,4-alpha-glucan-branching enzyme (GLC3) from Candida glabrata (strain ATCC 2001 / BCRC 20586 / JCM 3761 / NBRC 0622 / NRRL Y-65 / CBS 138) (Yeast).